The chain runs to 550 residues: M-phase inducer phosphatase 1-B (550 aa).

2 disordered regions span residues 76 to 98 (NLGD…GKVE) and 285 to 335 (SPSM…QRRG). The segment covering 290 to 310 (EKLDRPMLKRPVRPLDSETPV) has biased composition (basic and acidic residues). The segment covering 322–335 (LQPQEENFQPQRRG) has biased composition (polar residues). The 108-residue stretch at 401 to 508 (LVEKIFIIDC…FFPEYKELCE (108 aa)) folds into the Rhodanese domain. Residue C457 is part of the active site.

It belongs to the MPI phosphatase family.

The enzyme catalyses O-phospho-L-tyrosyl-[protein] + H2O = L-tyrosyl-[protein] + phosphate. Its function is as follows. Tyrosine protein phosphatase which functions as a dosage-dependent inducer of mitotic progression. Directly dephosphorylates CDK1 and stimulates its kinase activity. The polypeptide is M-phase inducer phosphatase 1-B (cdc25-1-b) (Xenopus laevis (African clawed frog)).